Reading from the N-terminus, the 112-residue chain is MKLPEVEVVVKKYDKDEVLLELPGEDHTLCNLLRWALNRQDGIIATYRIEHPILGKEHKVDEERYVPPKMRIRAVDEDADAREALERAIEELLELVEEAKEEFSGALEEKES.

This sequence belongs to the archaeal Rpo11/eukaryotic RPB11/RPC19 RNA polymerase subunit family. As to quaternary structure, part of the RNA polymerase complex.

It is found in the cytoplasm. It catalyses the reaction RNA(n) + a ribonucleoside 5'-triphosphate = RNA(n+1) + diphosphate. Functionally, DNA-dependent RNA polymerase (RNAP) catalyzes the transcription of DNA into RNA using the four ribonucleoside triphosphates as substrates. The sequence is that of DNA-directed RNA polymerase subunit Rpo11 from Methanopyrus kandleri (strain AV19 / DSM 6324 / JCM 9639 / NBRC 100938).